The following is a 75-amino-acid chain: F1845 fimbrial adhesin operon regulatory protein DaaF (75 aa).

Functionally, may have a possible regulatory function on the expression of the other daa genes. The chain is F1845 fimbrial adhesin operon regulatory protein DaaF (daaF) from Escherichia coli.